Consider the following 224-residue polypeptide: MSFTSLPLTEINHKLPARNIIESQWITLQLTLFAQEQQAKRVSHAIVSSAYRKAEKIIRDAYRYQREQKVEQQQELACLRKNTLEKMEVEWLEQHVKHLQDDENQFRSLVDHAAHHIKNSIEQVLLAWFDQQSVDSVMCHRLARQATAMAEEGALYLRIHPEKEALMRETFGKRFTLIIEPGFSPDQAELSSTRYAVEFSLSRHFNALLKWLRNGEDKRGSDEY.

Belongs to the SctL stator family. The core secretion machinery of the T3SS is composed of approximately 20 different proteins, including cytoplasmic components, a base, an export apparatus and a needle. This subunit is part of the cytosolic complex. Interacts directly with SsaN/SctN2 (T3SS-2 ATPase).

Its subcellular location is the cytoplasm. Its function is as follows. Component of the type III secretion system (T3SS), also called injectisome, which is used to inject bacterial effector proteins into eukaryotic host cells. Acts as a regulator of the SsaN/SctN2 ATPase activity. The protein is SPI-2 type 3 secretion system stator protein of Salmonella typhimurium (strain LT2 / SGSC1412 / ATCC 700720).